Reading from the N-terminus, the 594-residue chain is uncharacterized protein (594 aa).

Positions Cys11–Cys38 form a DNA-binding region, zn(2)-C6 fungal-type. Residues Tyr503–Val523 form a helical membrane-spanning segment.

Its subcellular location is the nucleus. The protein localises to the membrane. This is an uncharacterized protein from Schizosaccharomyces pombe (strain 972 / ATCC 24843) (Fission yeast).